The following is a 1028-amino-acid chain: Contactin-6 (1028 aa).

The signal sequence occupies residues 1–19 (MRLLWKLVILLPLINSCAG). Ig-like C2-type domains are found at residues 32-117 (PQDV…AKLQ), 122-208 (EDFE…RSVQ), 227-308 (PKIE…RNLA), 318-402 (PEWE…AELR), 408-495 (PDFS…GSLI), and 499-587 (RTVI…ERLS). 6 disulfide bridges follow: C50/C100, C144/C196, C249/C297, C339/C386, C431/C479, and C521/C577. N65 and N193 each carry an N-linked (GlcNAc...) asparagine glycan. Residues N368, N377, and N468 are each glycosylated (N-linked (GlcNAc...) asparagine). 4 Fibronectin type-III domains span residues 600–698 (PPED…TKAS), 703–800 (APVN…SGED), 805–901 (APRG…TKKS), and 902–996 (PPSQ…KMSS). 4 N-linked (GlcNAc...) asparagine glycosylation sites follow: N659, N765, N860, and N865. Y882 is modified (phosphotyrosine). Positions 887 to 902 (TGPSSPPVNVTTKKSP) are enriched in polar residues. The disordered stretch occupies residues 887–908 (TGPSSPPVNVTTKKSPPSQPPA). N-linked (GlcNAc...) asparagine glycosylation is found at N895, N931, N956, and N957. A lipid anchor (GPI-anchor amidated serine) is attached at S999. A propeptide spans 1000–1028 (VGVQILKPSTQFLTMVGFFYCFVIQPLSR) (removed in mature form).

It belongs to the immunoglobulin superfamily. Contactin family. As to quaternary structure, interacts with PTPRG. In terms of tissue distribution, specifically expressed in neuronal cells. In brain, it is expressed in spinal cord, cerebrum and cerebellum. At 17 dpc, it is expressed in hippocampus, cerebellum, and the brain stem. Strongly expressed after birth with a maximum level between P1 and P21, which corresponds to the time frame of oligodendrogliogenesis.

It is found in the cell membrane. Functionally, contactins mediate cell surface interactions during nervous system development. Participates in oligodendrocytes generation by acting as a ligand of NOTCH1. Its association with NOTCH1 promotes NOTCH1 activation through the released notch intracellular domain (NICD) and subsequent translocation to the nucleus. May be involved in motor coordination. The protein is Contactin-6 (Cntn6) of Rattus norvegicus (Rat).